The following is a 415-amino-acid chain: Gamma-glutamyl phosphate reductase (415 aa).

Belongs to the gamma-glutamyl phosphate reductase family.

It is found in the cytoplasm. It catalyses the reaction L-glutamate 5-semialdehyde + phosphate + NADP(+) = L-glutamyl 5-phosphate + NADPH + H(+). It participates in amino-acid biosynthesis; L-proline biosynthesis; L-glutamate 5-semialdehyde from L-glutamate: step 2/2. In terms of biological role, catalyzes the NADPH-dependent reduction of L-glutamate 5-phosphate into L-glutamate 5-semialdehyde and phosphate. The product spontaneously undergoes cyclization to form 1-pyrroline-5-carboxylate. In Bacteroides fragilis (strain YCH46), this protein is Gamma-glutamyl phosphate reductase.